We begin with the raw amino-acid sequence, 4490 residues long: Dynein axonemal heavy chain 8 (4490 aa).

S674 is modified (phosphoserine). AAA regions lie at residues Y1808–T2030, N2090–L2309, Y2416–G2669, and Q2780–R3034. Residues G1846–T1853 and G2128–T2135 contribute to the ATP site. The stalk stretch occupies residues Y3049–C3346. Coiled-coil stretches lie at residues D3072 to T3164, L3290 to S3354, and R3594 to L3630. AAA regions lie at residues L3432–E3662 and A3877–N4091.

The protein belongs to the dynein heavy chain family. Consists of at least two heavy chains and a number of intermediate and light chains. As to expression, expressed in spermatozoa (at protein level). Not detected in airway epithelial cells (at protein level).

It localises to the cytoplasm. It is found in the cytoskeleton. Its subcellular location is the flagellum axoneme. Functionally, force generating protein component of the outer dynein arms (ODAs) in the sperm flagellum. Produces force towards the minus ends of microtubules. Dynein has ATPase activity; the force-producing power stroke is thought to occur on release of ADP. Involved in sperm motility; implicated in sperm flagellar assembly. This is Dynein axonemal heavy chain 8 from Homo sapiens (Human).